A 204-amino-acid chain; its full sequence is N-(5'-phosphoribosyl)anthranilate isomerase (204 aa).

Belongs to the TrpF family.

The enzyme catalyses N-(5-phospho-beta-D-ribosyl)anthranilate = 1-(2-carboxyphenylamino)-1-deoxy-D-ribulose 5-phosphate. Its pathway is amino-acid biosynthesis; L-tryptophan biosynthesis; L-tryptophan from chorismate: step 3/5. The chain is N-(5'-phosphoribosyl)anthranilate isomerase from Bacillus cereus (strain AH187).